The chain runs to 443 residues: Tubulin beta chain (443 aa).

GTP is bound by residues glutamine 11, glutamate 69, serine 138, glycine 142, threonine 143, glycine 144, asparagine 204, and asparagine 226. Residue glutamate 69 participates in Mg(2+) binding.

The protein belongs to the tubulin family. In terms of assembly, dimer of alpha and beta chains. A typical microtubule is a hollow water-filled tube with an outer diameter of 25 nm and an inner diameter of 15 nM. Alpha-beta heterodimers associate head-to-tail to form protofilaments running lengthwise along the microtubule wall with the beta-tubulin subunit facing the microtubule plus end conferring a structural polarity. Microtubules usually have 13 protofilaments but different protofilament numbers can be found in some organisms and specialized cells. Mg(2+) serves as cofactor.

It localises to the cytoplasm. Its subcellular location is the cytoskeleton. Functionally, tubulin is the major constituent of microtubules, a cylinder consisting of laterally associated linear protofilaments composed of alpha- and beta-tubulin heterodimers. Microtubules grow by the addition of GTP-tubulin dimers to the microtubule end, where a stabilizing cap forms. Below the cap, tubulin dimers are in GDP-bound state, owing to GTPase activity of alpha-tubulin. The polypeptide is Tubulin beta chain (Thalassiosira weissflogii (Marine diatom)).